The primary structure comprises 288 residues: Long chain fatty acid elongase 1 (288 aa).

7 helical membrane passes run 39 to 59 (FFAD…VVVF), 73 to 93 (LTIP…AGAV), 126 to 146 (WVWL…FLVL), 150 to 170 (PLMF…WYSH), 180 to 197 (GIYL…YYFL), 217 to 237 (IVQF…MHFT), and 247 to 267 (VFKL…NFFL).

It belongs to the ELO family.

It is found in the membrane. It catalyses the reaction (6Z,9Z,12Z)-octadecatrienoyl-CoA + malonyl-CoA + H(+) = (8Z,11Z,14Z)-3-oxoeicosatrienoyl-CoA + CO2 + CoA. The catalysed reaction is (6Z,9Z,12Z,15Z)-octadecatetraenoyl-CoA + malonyl-CoA + H(+) = (8Z,11Z,14Z,17Z)-3-oxoicosatetraenoyl-CoA + CO2 + CoA. It carries out the reaction (9Z)-hexadecenoyl-CoA + malonyl-CoA + H(+) = 3-oxo-(11Z)-octadecenoyl-CoA + CO2 + CoA. It functions in the pathway lipid metabolism; fatty acid biosynthesis. Functionally, catalyzes the first and rate-limiting reaction of the four reactions that constitute the long-chain fatty acids elongation cycle. Uses malonyl-CoA to add 2 carbons per cycle to the chain of long-chain fatty acids. Condensing enzyme that catalyzes the elongation of monounsaturated (MUFA) and polyunsaturated (PUFA) fatty acids that are involved in multiple biological processes as precursors of membrane lipids and lipid mediators. This chain is Long chain fatty acid elongase 1, found in Caenorhabditis elegans.